A 261-amino-acid polypeptide reads, in one-letter code: Adenosylcobinamide-GDP ribazoletransferase (261 aa).

The next 7 membrane-spanning stretches (helical) occupy residues 9 to 29 (LELF…VSLP), 41 to 61 (YFAL…SLAT), 64 to 84 (FSTN…TGAF), 114 to 134 (IGTY…LLLT), 141 to 161 (SLVP…ASLI), 196 to 216 (ATLL…SLIF), and 235 to 255 (CLGA…LAFL).

It belongs to the CobS family. Mg(2+) serves as cofactor.

The protein localises to the cell inner membrane. It catalyses the reaction alpha-ribazole + adenosylcob(III)inamide-GDP = adenosylcob(III)alamin + GMP + H(+). The enzyme catalyses alpha-ribazole 5'-phosphate + adenosylcob(III)inamide-GDP = adenosylcob(III)alamin 5'-phosphate + GMP + H(+). Its pathway is cofactor biosynthesis; adenosylcobalamin biosynthesis; adenosylcobalamin from cob(II)yrinate a,c-diamide: step 7/7. Functionally, joins adenosylcobinamide-GDP and alpha-ribazole to generate adenosylcobalamin (Ado-cobalamin). Also synthesizes adenosylcobalamin 5'-phosphate from adenosylcobinamide-GDP and alpha-ribazole 5'-phosphate. The chain is Adenosylcobinamide-GDP ribazoletransferase from Vibrio cholerae serotype O1 (strain ATCC 39541 / Classical Ogawa 395 / O395).